The chain runs to 341 residues: Phosphoribosylformylglycinamidine cyclo-ligase (341 aa).

This sequence belongs to the AIR synthase family.

It is found in the cytoplasm. It catalyses the reaction 2-formamido-N(1)-(5-O-phospho-beta-D-ribosyl)acetamidine + ATP = 5-amino-1-(5-phospho-beta-D-ribosyl)imidazole + ADP + phosphate + H(+). It participates in purine metabolism; IMP biosynthesis via de novo pathway; 5-amino-1-(5-phospho-D-ribosyl)imidazole from N(2)-formyl-N(1)-(5-phospho-D-ribosyl)glycinamide: step 2/2. The sequence is that of Phosphoribosylformylglycinamidine cyclo-ligase from Synechococcus elongatus (strain ATCC 33912 / PCC 7942 / FACHB-805) (Anacystis nidulans R2).